The following is an 86-amino-acid chain: Small ribosomal subunit protein uS15 (86 aa).

Residues methionine 1–proline 22 are disordered. A compositionally biased stretch (basic and acidic residues) spans lysine 7–alanine 16.

This sequence belongs to the universal ribosomal protein uS15 family. Part of the 30S ribosomal subunit. Forms a bridge to the 50S subunit in the 70S ribosome, contacting the 23S rRNA.

Functionally, one of the primary rRNA binding proteins, it binds directly to 16S rRNA where it helps nucleate assembly of the platform of the 30S subunit by binding and bridging several RNA helices of the 16S rRNA. In terms of biological role, forms an intersubunit bridge (bridge B4) with the 23S rRNA of the 50S subunit in the ribosome. In Xanthomonas axonopodis pv. citri (strain 306), this protein is Small ribosomal subunit protein uS15.